The chain runs to 57 residues: Large ribosomal subunit protein uL30 (57 aa).

It belongs to the universal ribosomal protein uL30 family. In terms of assembly, part of the 50S ribosomal subunit.

In Clostridium perfringens (strain ATCC 13124 / DSM 756 / JCM 1290 / NCIMB 6125 / NCTC 8237 / Type A), this protein is Large ribosomal subunit protein uL30.